Consider the following 245-residue polypeptide: Adenylate kinase (245 aa).

Residue 15–20 (GSGKGT) participates in ATP binding. Residues 35 to 64 (SSGDLLRGAVSKDTPLSQEIKSYLDQGKLL) form an NMP region. AMP-binding positions include Ser36, Arg41, 62–64 (KLL), 103–106 (GFPR), and Gln110. Positions 143-176 (SRYICPACQGIYNEQQGFSSCPKCSVELIRRSDD) are LID. Residue Arg144 participates in ATP binding. 2 residues coordinate Zn(2+): Cys147 and Cys150. 153 to 154 (IY) provides a ligand contact to ATP. Zn(2+) contacts are provided by Cys163 and Cys166. Arg173 and Arg184 together coordinate AMP. Ala212 contacts ATP.

This sequence belongs to the adenylate kinase family. In terms of assembly, monomer.

The protein resides in the cytoplasm. The enzyme catalyses AMP + ATP = 2 ADP. Its pathway is purine metabolism; AMP biosynthesis via salvage pathway; AMP from ADP: step 1/1. Functionally, catalyzes the reversible transfer of the terminal phosphate group between ATP and AMP. Plays an important role in cellular energy homeostasis and in adenine nucleotide metabolism. The sequence is that of Adenylate kinase from Chlamydia trachomatis serovar L2 (strain ATCC VR-902B / DSM 19102 / 434/Bu).